Consider the following 133-residue polypeptide: Protein OPG104 (133 aa).

Residues Met-1 to Pro-111 are Virion surface-facing. The chain crosses the membrane as a helical; Signal-anchor span at residues Ile-112–Phe-132.

This sequence belongs to the orthopoxvirus OPG104 family. In terms of assembly, part of a stable entry-fusion complex (EFC) which is at least composed of proteins OPG143, OPG147, OPG155, OPG086, OPG094, OPG107, OPG104, and OPG099. Formation of the viral membrane is necessary for the assembly of the complex.

It is found in the virion membrane. In terms of biological role, envelope protein part of the entry-fusion complex responsible for the virus membrane fusion with host cell membrane during virus entry. Also plays a role in cell-cell fusion (syncytium formation). The protein is Protein OPG104 (OPG104) of Homo sapiens (Human).